Here is a 350-residue protein sequence, read N- to C-terminus: HTH-type DNA-binding transcriptional activator EutR (350 aa).

The HTH araC/xylS-type domain occupies 243–344 (SRAREYVLEN…AEKPSLTLHQ (102 aa)). 2 DNA-binding regions (H-T-H motif) span residues 260–281 (LDLC…HAIL) and 311–334 (VKDA…QQLF).

It participates in amine and polyamine degradation; ethanolamine degradation. In terms of biological role, activates the transcription of the eut operon, allowing utilization of ethanolamine (EA). Positively regulates its own transcription. Probably binds EA and vitamin B12 as effectors. Competes with ethanolamine ammonia-lysase (EAL, the first enzyme in the EA degradation pathway) for adenosylcobalamin. Ethanolamine-associated signaling mediated via this protein, but not EA degradation, impacts S.typhimurium survival within macrophages. Binds the promoter of ssrB and eutS in vitro; in mouse infection models binding to ssrB probably induces all 4 operons of pathogenicity island SPI-2. Expression of the eut operon allows this bacteria to use ethanolamine (EA) as a carbon, nitrogen and energy source. It relies on cobalamin (vitamin B12) both as a cofactor for the ethanolamine ammonia-lyase (EAL) activity and to induce the operon. EA enhances bacterial survival in macrophages in a concentration-dependent manner, suggesting it is an important nutrient in infection. The polypeptide is HTH-type DNA-binding transcriptional activator EutR (Salmonella typhimurium (strain LT2 / SGSC1412 / ATCC 700720)).